A 284-amino-acid chain; its full sequence is Release factor glutamine methyltransferase (284 aa).

Residues 123–127 (GTGTG), D146, W174, and N189 contribute to the S-adenosyl-L-methionine site. Residue 189–192 (NPPY) coordinates substrate.

This sequence belongs to the protein N5-glutamine methyltransferase family. PrmC subfamily.

The enzyme catalyses L-glutaminyl-[peptide chain release factor] + S-adenosyl-L-methionine = N(5)-methyl-L-glutaminyl-[peptide chain release factor] + S-adenosyl-L-homocysteine + H(+). In terms of biological role, methylates the class 1 translation termination release factors RF1/PrfA and RF2/PrfB on the glutamine residue of the universally conserved GGQ motif. In Francisella tularensis subsp. tularensis (strain SCHU S4 / Schu 4), this protein is Release factor glutamine methyltransferase.